Consider the following 269-residue polypeptide: GTP cyclohydrolase FolE2 (269 aa).

The protein belongs to the GTP cyclohydrolase IV family.

It catalyses the reaction GTP + H2O = 7,8-dihydroneopterin 3'-triphosphate + formate + H(+). Its pathway is cofactor biosynthesis; 7,8-dihydroneopterin triphosphate biosynthesis; 7,8-dihydroneopterin triphosphate from GTP: step 1/1. Its function is as follows. Converts GTP to 7,8-dihydroneopterin triphosphate. This is GTP cyclohydrolase FolE2 from Burkholderia ambifaria (strain MC40-6).